The chain runs to 260 residues: Global transcriptional regulator CodY (260 aa).

A GAF domain region spans residues 1–159 (MPNLLEKTRK…SSTVVGIQLL (159 aa)). Positions 207–226 (ASVIADRIGITRSVIVNALR) form a DNA-binding region, H-T-H motif.

The protein belongs to the CodY family.

It is found in the cytoplasm. In terms of biological role, DNA-binding global transcriptional regulator which is involved in the adaptive response to starvation and acts by directly or indirectly controlling the expression of numerous genes in response to nutrient availability. During rapid exponential growth, CodY is highly active and represses genes whose products allow adaptation to nutrient depletion. The sequence is that of Global transcriptional regulator CodY from Streptococcus equi subsp. zooepidemicus (strain H70).